The sequence spans 1188 residues: uncharacterized protein (1188 aa).

Transmembrane regions (helical) follow at residues 73 to 93 (FVVNYATVPMFMSASFCHLLM), 878 to 898 (IFSVFIYYECNLVLFSGDSGI), and 1089 to 1109 (VIPLFLLCGTEGQIYIISEFI).

It localises to the membrane. This is an uncharacterized protein from Saccharomyces cerevisiae (strain ATCC 204508 / S288c) (Baker's yeast).